Consider the following 171-residue polypeptide: S-ribosylhomocysteine lyase (171 aa).

Residues His54, His58, and Cys128 each coordinate Fe cation.

This sequence belongs to the LuxS family. In terms of assembly, homodimer. Fe cation is required as a cofactor.

It carries out the reaction S-(5-deoxy-D-ribos-5-yl)-L-homocysteine = (S)-4,5-dihydroxypentane-2,3-dione + L-homocysteine. Involved in the synthesis of autoinducer 2 (AI-2) which is secreted by bacteria and is used to communicate both the cell density and the metabolic potential of the environment. The regulation of gene expression in response to changes in cell density is called quorum sensing. Catalyzes the transformation of S-ribosylhomocysteine (RHC) to homocysteine (HC) and 4,5-dihydroxy-2,3-pentadione (DPD). The polypeptide is S-ribosylhomocysteine lyase (Yersinia enterocolitica serotype O:8 / biotype 1B (strain NCTC 13174 / 8081)).